Here is a 117-residue protein sequence, read N- to C-terminus: Huntingtin-interacting protein M (117 aa).

2 disordered regions span residues 1–30 (MSEK…VPRS) and 71–117 (EASN…RKND). Residues 72-81 (ASNNGSMRNT) show a composition bias toward polar residues. A compositionally biased stretch (basic and acidic residues) spans 82-117 (SQDREREVDNNREPHSAESDVTRFLFDEMPKSRKND).

In terms of assembly, may interact with the N-terminus of HD.

The chain is Huntingtin-interacting protein M from Homo sapiens (Human).